The sequence spans 416 residues: UDP-N-acetylmuramoylalanine--D-glutamate ligase (416 aa).

ATP is bound at residue 108-114; the sequence is GTVGKTT.

It belongs to the MurCDEF family.

It localises to the cytoplasm. The enzyme catalyses UDP-N-acetyl-alpha-D-muramoyl-L-alanine + D-glutamate + ATP = UDP-N-acetyl-alpha-D-muramoyl-L-alanyl-D-glutamate + ADP + phosphate + H(+). It functions in the pathway cell wall biogenesis; peptidoglycan biosynthesis. Functionally, cell wall formation. Catalyzes the addition of glutamate to the nucleotide precursor UDP-N-acetylmuramoyl-L-alanine (UMA). This Chlamydia muridarum (strain MoPn / Nigg) protein is UDP-N-acetylmuramoylalanine--D-glutamate ligase.